The chain runs to 666 residues: Kinesin-like protein Nod (666 aa).

Residues 8–320 (AVRIAVREAP…LRFGTSAKKL (313 aa)) enclose the Kinesin motor domain. 87–94 (GQTGTGKS) is a binding site for ATP. The segment at 423–450 (GFHSDSDKDRHLMPPPTGQEPRQASSQN) is disordered. Residues 639–666 (ENLFQVKSLPIWSGNKWERFCQINCLDT) adopt a coiled-coil conformation.

The protein belongs to the TRAFAC class myosin-kinesin ATPase superfamily. Kinesin family. In terms of tissue distribution, in adult female, found in meiotically active ovaries.

It localises to the cytoplasm. The protein resides in the cytoskeleton. Required for the distributive chromosome segregation of non-exchange chromosomes during meiosis. May be a microtubule motor required to hold distributively 'paired' chromosomes at the metaphase plate until anaphase. The protein is Kinesin-like protein Nod (nod) of Drosophila melanogaster (Fruit fly).